Here is a 287-residue protein sequence, read N- to C-terminus: Inorganic pyrophosphatase (287 aa).

Arg80 serves as a coordination point for diphosphate. Mg(2+) contacts are provided by Asp117, Asp122, and Asp154.

It belongs to the PPase family. The cofactor is Mg(2+).

The protein localises to the cytoplasm. The enzyme catalyses diphosphate + H2O = 2 phosphate + H(+). In Yarrowia lipolytica (strain CLIB 122 / E 150) (Yeast), this protein is Inorganic pyrophosphatase (IPP1).